The following is a 151-amino-acid chain: Prefoldin subunit alpha (151 aa).

Belongs to the prefoldin subunit alpha family. Heterohexamer of two alpha and four beta subunits.

It localises to the cytoplasm. Functionally, molecular chaperone capable of stabilizing a range of proteins. Seems to fulfill an ATP-independent, HSP70-like function in archaeal de novo protein folding. This is Prefoldin subunit alpha from Sulfurisphaera tokodaii (strain DSM 16993 / JCM 10545 / NBRC 100140 / 7) (Sulfolobus tokodaii).